The sequence spans 180 residues: Protein SPMIP9 (180 aa).

As to quaternary structure, microtubule inner protein component of sperm flagellar doublet microtubules. Testis-specific. Detected in the germ cell lineage at all stages.

It is found in the nucleus. Its subcellular location is the cytoplasm. The protein localises to the cytoskeleton. The protein resides in the flagellum axoneme. Its function is as follows. Microtubule inner protein (MIP) part of the dynein-decorated doublet microtubules (DMTs) in flagella axoneme. In Homo sapiens (Human), this protein is Protein SPMIP9.